The primary structure comprises 425 residues: Glutamyl-tRNA reductase (425 aa).

Residues 49–52 (TCNR), Ser-109, 114–116 (EGQ), and Gln-120 contribute to the substrate site. The Nucleophile role is filled by Cys-50. 189–194 (GAGETG) contacts NADP(+).

It belongs to the glutamyl-tRNA reductase family. Homodimer.

It catalyses the reaction (S)-4-amino-5-oxopentanoate + tRNA(Glu) + NADP(+) = L-glutamyl-tRNA(Glu) + NADPH + H(+). It participates in porphyrin-containing compound metabolism; protoporphyrin-IX biosynthesis; 5-aminolevulinate from L-glutamyl-tRNA(Glu): step 1/2. Its pathway is porphyrin-containing compound metabolism; chlorophyll biosynthesis. Catalyzes the NADPH-dependent reduction of glutamyl-tRNA(Glu) to glutamate 1-semialdehyde (GSA). In Pelodictyon phaeoclathratiforme (strain DSM 5477 / BU-1), this protein is Glutamyl-tRNA reductase.